A 262-amino-acid chain; its full sequence is Indole-3-glycerol phosphate synthase (262 aa).

This sequence belongs to the TrpC family.

It catalyses the reaction 1-(2-carboxyphenylamino)-1-deoxy-D-ribulose 5-phosphate + H(+) = (1S,2R)-1-C-(indol-3-yl)glycerol 3-phosphate + CO2 + H2O. It participates in amino-acid biosynthesis; L-tryptophan biosynthesis; L-tryptophan from chorismate: step 4/5. The chain is Indole-3-glycerol phosphate synthase from Dechloromonas aromatica (strain RCB).